A 287-amino-acid chain; its full sequence is Sulfofructosephosphate aldolase (287 aa).

The active-site Proton donor is the Asp82. The Zn(2+) site is built by His83 and His180. Residue Gly181 participates in dihydroxyacetone phosphate binding. Residue His208 coordinates Zn(2+). Residues 209–211 (GGS) and 230–233 (NVDT) contribute to the dihydroxyacetone phosphate site.

Belongs to the class II fructose-bisphosphate aldolase family. The cofactor is Zn(2+).

It catalyses the reaction 6-deoxy-6-sulfo-D-fructose 1-phosphate = (2S)-3-sulfolactaldehyde + dihydroxyacetone phosphate. In terms of biological role, part of the sulfo-EMP2 pathway, a D-sulfoquinovose degradation pathway that produces sulfolactate (SL). Cleaves 6-deoxy-6-sulfo-D-fructose 1-phosphate (SFP) to form dihydroxyacetone phosphate (DHAP) and 3-sulfolactaldehyde (SLA). This chain is Sulfofructosephosphate aldolase, found in Alkalicoccus urumqiensis (Bacillus urumqiensis).